The following is a 417-amino-acid chain: Serine/threonine-protein phosphatase 4 regulatory subunit 2 (417 aa).

Composition is skewed to polar residues over residues Glu140–Arg149, Asn158–Gly170, and Ala186–Ser196. The disordered stretch occupies residues Glu140–Asp417. Ser159 is subject to Phosphoserine. Residues Thr197 to Ser213 are compositionally biased toward basic and acidic residues. The span at Asp214–Ser226 shows a compositional bias: low complexity. Ser226 bears the Phosphoserine mark. A compositionally biased stretch (basic and acidic residues) spans Lys231 to Glu258. A compositionally biased stretch (polar residues) spans Thr259 to Ser269. Basic and acidic residues predominate over residues Gln283–Thr297. The span at Glu298–Ser311 shows a compositional bias: acidic residues. A compositionally biased stretch (basic and acidic residues) spans Met318–Lys327. A compositionally biased stretch (acidic residues) spans Glu338–Asp350. A compositionally biased stretch (basic and acidic residues) spans Gln353–Gly363. Over residues Asn366–Ser375 the composition is skewed to low complexity. Polar residues predominate over residues Gly385–Ser399. Over residues Met400–Asp417 the composition is skewed to acidic residues.

The protein belongs to the PPP4R2 family. As to quaternary structure, serine/threonine-protein phosphatase 4 (PP4) occurs in different assemblies of the catalytic and one or more regulatory subunits. Component of the PP4 complexes PPP4C-PPP4R2, PPP4C-PPP4R2-PPP4R3A and PPP4C-PPP4R2-PPP4R3B. The PPP4C-PPP4R2 complex appears to be a tetramer composed of 2 molecules of PPP4C and 2 molecules of PPP4R2. Interacts with DDX20/GEMIN3 and GEMIN4. Interacts with RPA2; this DNA damage-dependent interaction recruits PPP4C leading to RPA2 dephosphorylation. In terms of tissue distribution, widely expressed.

It is found in the cytoplasm. Its subcellular location is the cytoskeleton. The protein localises to the microtubule organizing center. The protein resides in the centrosome. It localises to the nucleus. In terms of biological role, regulatory subunit of serine/threonine-protein phosphatase 4 (PP4). May regulate the activity of PPP4C at centrosomal microtubule organizing centers. Its interaction with the SMN complex leads to enhance the temporal localization of snRNPs, suggesting a role of PPP4C in maturation of spliceosomal snRNPs. The PPP4C-PPP4R2-PPP4R3A PP4 complex specifically dephosphorylates H2AX phosphorylated on 'Ser-140' (gamma-H2AX) generated during DNA replication and required for DNA double strand break repair. Mediates RPA2 dephosphorylation by recruiting PPP4C to RPA2 in a DNA damage-dependent manner. RPA2 dephosphorylation is required for the efficient RPA2-mediated recruitment of RAD51 to chromatin following double strand breaks, an essential step for DNA repair. The polypeptide is Serine/threonine-protein phosphatase 4 regulatory subunit 2 (PPP4R2) (Homo sapiens (Human)).